We begin with the raw amino-acid sequence, 416 residues long: Queuine tRNA-ribosyltransferase accessory subunit 2 (416 aa).

Zn(2+) contacts are provided by cysteine 350, cysteine 352, cysteine 355, and histidine 381.

It belongs to the queuine tRNA-ribosyltransferase family. QTRT2 subfamily. In terms of assembly, heterodimer of a catalytic subunit qtrt1 and an accessory subunit qtrt2. Zn(2+) serves as cofactor.

The protein resides in the cytoplasm. Its subcellular location is the mitochondrion outer membrane. In terms of biological role, non-catalytic subunit of the queuine tRNA-ribosyltransferase (TGT) that catalyzes the base-exchange of a guanine (G) residue with queuine (Q) at position 34 (anticodon wobble position) in tRNAs with GU(N) anticodons (tRNA-Asp, -Asn, -His and -Tyr), resulting in the hypermodified nucleoside queuosine (7-(((4,5-cis-dihydroxy-2-cyclopenten-1-yl)amino)methyl)-7-deazaguanosine). In Danio rerio (Zebrafish), this protein is Queuine tRNA-ribosyltransferase accessory subunit 2.